A 254-amino-acid chain; its full sequence is Small ribosomal subunit protein eS1 (254 aa).

Residue A2 is modified to N-acetylalanine; partial.

It belongs to the eukaryotic ribosomal protein eS1 family. Component of the small ribosomal subunit. Mature ribosomes consist of a small (40S) and a large (60S) subunit. The 40S subunit contains about 33 different proteins and 1 molecule of RNA (18S). The 60S subunit contains about 49 different proteins and 3 molecules of RNA (25S, 5.8S and 5S).

The protein resides in the cytoplasm. This chain is Small ribosomal subunit protein eS1, found in Zygosaccharomyces rouxii (strain ATCC 2623 / CBS 732 / NBRC 1130 / NCYC 568 / NRRL Y-229).